We begin with the raw amino-acid sequence, 198 residues long: Golgi to ER traffic protein 1 (198 aa).

At 1-6 (MDPFSI) the chain is on the lumenal side. A helical transmembrane segment spans residues 7–26 (LLTLTLIILAQNAVRIVGKS). Topologically, residues 27–110 (QIHQSIWNLY…AIEKYLGLAI (84 aa)) are cytoplasmic. Positions 73 to 106 (KWTKLNRKYDQLQTEIKAVSDQVSQQQQAIEKYL) form a coiled coil. The chain crosses the membrane as a helical span at residues 111–131 (SVTTTLPLWLFRFKYRKQPLF). The Lumenal segment spans residues 132–155 (YFPKDTFPSYLEWILSFPSVPQGS). Residues 156 to 172 (IGIMFWILLLNKFVSNL) form a helical membrane-spanning segment. At 173–198 (EFIVKTFSTKVEKPVPIVKVEDLSPK) the chain is on the cytoplasmic side.

This sequence belongs to the WRB/GET1 family. As to quaternary structure, component of the Golgi to ER traffic (GET) complex, which is composed of GET1, GET2 and GET3. Within the complex, GET1 and GET2 form a heterotetramer which is stabilized by phosphatidylinositol binding and which binds to the GET3 homodimer.

The protein resides in the endoplasmic reticulum membrane. It localises to the golgi apparatus membrane. Its function is as follows. Required for the post-translational delivery of tail-anchored (TA) proteins to the endoplasmic reticulum. Together with GET2, acts as a membrane receptor for soluble GET3, which recognizes and selectively binds the transmembrane domain of TA proteins in the cytosol. The GET complex cooperates with the HDEL receptor ERD2 to mediate the ATP-dependent retrieval of resident ER proteins that contain a C-terminal H-D-E-L retention signal from the Golgi to the ER. This is Golgi to ER traffic protein 1 from Komagataella phaffii (strain GS115 / ATCC 20864) (Yeast).